A 155-amino-acid polypeptide reads, in one-letter code: D-aminoacyl-tRNA deacylase (155 aa).

A Gly-cisPro motif, important for rejection of L-amino acids motif is present at residues 137-138 (GP).

The protein belongs to the DTD family. In terms of assembly, homodimer.

The protein localises to the cytoplasm. The enzyme catalyses glycyl-tRNA(Ala) + H2O = tRNA(Ala) + glycine + H(+). It carries out the reaction a D-aminoacyl-tRNA + H2O = a tRNA + a D-alpha-amino acid + H(+). Its function is as follows. An aminoacyl-tRNA editing enzyme that deacylates mischarged D-aminoacyl-tRNAs. Also deacylates mischarged glycyl-tRNA(Ala), protecting cells against glycine mischarging by AlaRS. Acts via tRNA-based rather than protein-based catalysis; rejects L-amino acids rather than detecting D-amino acids in the active site. By recycling D-aminoacyl-tRNA to D-amino acids and free tRNA molecules, this enzyme counteracts the toxicity associated with the formation of D-aminoacyl-tRNA entities in vivo and helps enforce protein L-homochirality. This is D-aminoacyl-tRNA deacylase from Geotalea uraniireducens (strain Rf4) (Geobacter uraniireducens).